We begin with the raw amino-acid sequence, 255 residues long: Ribonuclease HII (255 aa).

An RNase H type-2 domain is found at 70–255 (DLVAGIDEVG…FEPVPEFLIK (186 aa)). A divalent metal cation-binding residues include Asp-76, Glu-77, and Asp-168.

The protein belongs to the RNase HII family. The cofactor is Mn(2+). Requires Mg(2+) as cofactor.

Its subcellular location is the cytoplasm. The enzyme catalyses Endonucleolytic cleavage to 5'-phosphomonoester.. Functionally, endonuclease that specifically degrades the RNA of RNA-DNA hybrids. The polypeptide is Ribonuclease HII (Pediococcus pentosaceus (strain ATCC 25745 / CCUG 21536 / LMG 10740 / 183-1w)).